We begin with the raw amino-acid sequence, 390 residues long: Endonuclease 8-like 1 (390 aa).

Catalysis depends on Pro-2, which acts as the Schiff-base intermediate with DNA. Glu-3 (proton donor) is an active-site residue. Lys-54 acts as the Proton donor; for beta-elimination activity in catalysis. DNA is bound at residue Asn-176. The disordered stretch occupies residues 278 to 390 (TIWFQGDPGP…SLEPEGTSAS (113 aa)). A compositionally biased stretch (basic residues) spans 291–301 (KGRKSRKKKSK). Residues 335-347 (TATQRPEGTSLQQ) are compositionally biased toward polar residues. Arg-339 provides a ligand contact to DNA. Catalysis depends on Arg-339, which acts as the Proton donor; for delta-elimination activity.

This sequence belongs to the FPG family. In terms of tissue distribution, ubiquitous.

The protein localises to the cytoplasm. It localises to the cytoskeleton. Its subcellular location is the microtubule organizing center. It is found in the centrosome. The protein resides in the nucleus. The protein localises to the chromosome. The enzyme catalyses 2'-deoxyribonucleotide-(2'-deoxyribose 5'-phosphate)-2'-deoxyribonucleotide-DNA = a 3'-end 2'-deoxyribonucleotide-(2,3-dehydro-2,3-deoxyribose 5'-phosphate)-DNA + a 5'-end 5'-phospho-2'-deoxyribonucleoside-DNA + H(+). Its function is as follows. Involved in base excision repair of DNA damaged by oxidation or by mutagenic agents. Acts as a DNA glycosylase that recognizes and removes damaged bases. Has a preference for oxidized pyrimidines, such as thymine glycol, formamidopyrimidine (Fapy) and 5-hydroxyuracil. Has marginal activity towards 8-oxoguanine. Has AP (apurinic/apyrimidinic) lyase activity and introduces nicks in the DNA strand. Cleaves the DNA backbone by beta-delta elimination to generate a single-strand break at the site of the removed base with both 3'- and 5'-phosphates. Has DNA glycosylase/lyase activity towards mismatched uracil and thymine, in particular in U:C and T:C mismatches. Specifically binds 5-hydroxymethylcytosine (5hmC), suggesting that it acts as a specific reader of 5hmC. The sequence is that of Endonuclease 8-like 1 (NEIL1) from Homo sapiens (Human).